Here is a 525-residue protein sequence, read N- to C-terminus: Peptide chain release factor 3 (525 aa).

Positions Glu11 to Glu279 constitute a tr-type G domain. GTP is bound by residues Ser20–Thr27, Asp88–His92, and Asn142–Asp145.

The protein belongs to the TRAFAC class translation factor GTPase superfamily. Classic translation factor GTPase family. PrfC subfamily.

Its subcellular location is the cytoplasm. Functionally, increases the formation of ribosomal termination complexes and stimulates activities of RF-1 and RF-2. It binds guanine nucleotides and has strong preference for UGA stop codons. It may interact directly with the ribosome. The stimulation of RF-1 and RF-2 is significantly reduced by GTP and GDP, but not by GMP. In Latilactobacillus sakei subsp. sakei (strain 23K) (Lactobacillus sakei subsp. sakei), this protein is Peptide chain release factor 3.